A 483-amino-acid chain; its full sequence is Cobyric acid synthase (483 aa).

In terms of domain architecture, GATase cobBQ-type spans 251-438; sequence ALIVAVPMLP…LHGVFSADRF (188 aa). The active-site Nucleophile is cysteine 333. The active site involves histidine 430.

This sequence belongs to the CobB/CobQ family. CobQ subfamily.

Its pathway is cofactor biosynthesis; adenosylcobalamin biosynthesis. Catalyzes amidations at positions B, D, E, and G on adenosylcobyrinic A,C-diamide. NH(2) groups are provided by glutamine, and one molecule of ATP is hydrogenolyzed for each amidation. This Brucella suis (strain ATCC 23445 / NCTC 10510) protein is Cobyric acid synthase.